The primary structure comprises 69 residues: Chondroitin proteoglycan 9 (69 aa).

Positions 1–19 (MHLWQLVLLVILFFGAAFG) are cleaved as a signal peptide. O-linked (Xyl...) (chondroitin sulfate) serine glycans are attached at residues serine 25 and serine 27.

In Caenorhabditis elegans, this protein is Chondroitin proteoglycan 9.